Here is a 212-residue protein sequence, read N- to C-terminus: Ribosomal RNA large subunit methyltransferase E (212 aa).

Positions 57, 59, 77, 93, and 122 each coordinate S-adenosyl-L-methionine. Lysine 162 serves as the catalytic Proton acceptor.

This sequence belongs to the class I-like SAM-binding methyltransferase superfamily. RNA methyltransferase RlmE family.

It localises to the cytoplasm. The enzyme catalyses uridine(2552) in 23S rRNA + S-adenosyl-L-methionine = 2'-O-methyluridine(2552) in 23S rRNA + S-adenosyl-L-homocysteine + H(+). Its function is as follows. Specifically methylates the uridine in position 2552 of 23S rRNA at the 2'-O position of the ribose in the fully assembled 50S ribosomal subunit. This Coxiella burnetii (strain RSA 331 / Henzerling II) protein is Ribosomal RNA large subunit methyltransferase E.